Reading from the N-terminus, the 141-residue chain is MSASVSSKSTVVSSIISGLLSIVLFGTLRFCSEWFNDSQLRVLLGGYLFSWVFILSLTCVSNAEMVVFGQDFQAKLLPEIIFCLSLTVAAAGLVHRVCATTSVLFSLVGLYFLNRISTKYYSVQVPSVDAPTTRKGGKKFK.

4 helical membrane-spanning segments follow: residues Val11–Cys31, Val42–Asn62, Ala74–Val94, and Val97–Ser117.

The protein belongs to the KRTCAP2 family. In terms of assembly, component of the oligosaccharyltransferase (OST) complex.

The protein resides in the membrane. Functionally, subunit of the oligosaccharyl transferase (OST) complex that catalyzes the initial transfer of a defined glycan (Glc(3)Man(9)GlcNAc(2) in eukaryotes) from the lipid carrier dolichol-pyrophosphate to an asparagine residue within an Asn-X-Ser/Thr consensus motif in nascent polypeptide chains, the first step in protein N-glycosylation. N-glycosylation occurs cotranslationally and the complex associates with the Sec61 complex at the channel-forming translocon complex that mediates protein translocation across the endoplasmic reticulum (ER). All subunits are required for a maximal enzyme activity. The protein is Protein KRTCAP2 homolog of Drosophila melanogaster (Fruit fly).